The chain runs to 407 residues: Peptidase T (407 aa).

His81 contacts Zn(2+). Residue Asp83 is part of the active site. Asp142 is a Zn(2+) binding site. Glu176 acts as the Proton acceptor in catalysis. 3 residues coordinate Zn(2+): Glu177, Asp199, and His381.

This sequence belongs to the peptidase M20B family. Zn(2+) serves as cofactor.

The protein localises to the cytoplasm. It catalyses the reaction Release of the N-terminal residue from a tripeptide.. Cleaves the N-terminal amino acid of tripeptides. This Streptococcus pneumoniae (strain P1031) protein is Peptidase T.